A 237-amino-acid polypeptide reads, in one-letter code: Phosphoribosylaminoimidazole-succinocarboxamide synthase (237 aa).

It belongs to the SAICAR synthetase family.

The catalysed reaction is 5-amino-1-(5-phospho-D-ribosyl)imidazole-4-carboxylate + L-aspartate + ATP = (2S)-2-[5-amino-1-(5-phospho-beta-D-ribosyl)imidazole-4-carboxamido]succinate + ADP + phosphate + 2 H(+). It functions in the pathway purine metabolism; IMP biosynthesis via de novo pathway; 5-amino-1-(5-phospho-D-ribosyl)imidazole-4-carboxamide from 5-amino-1-(5-phospho-D-ribosyl)imidazole-4-carboxylate: step 1/2. The protein is Phosphoribosylaminoimidazole-succinocarboxamide synthase of Shigella sonnei (strain Ss046).